Consider the following 392-residue polypeptide: Flavohemoprotein (392 aa).

The Globin domain maps to 1 to 139 (MLNAEQRAII…LADILIGAEE (139 aa)). His-85 is a binding site for heme b. Catalysis depends on charge relay system residues Tyr-95 and Glu-138. The segment at 150–392 (GGWRGTREFR…EFFGPAAALE (243 aa)) is reductase. One can recognise an FAD-binding FR-type domain in the interval 153 to 256 (RGTREFRLVR…FPPAGDFTLA (104 aa)). FAD-binding positions include Tyr-191 and 205–208 (RNYS). Residue 268–273 (GVGITP) participates in NADP(+) binding. An FAD-binding site is contributed by 384–387 (FFGP).

The protein belongs to the globin family. Two-domain flavohemoproteins subfamily. It in the C-terminal section; belongs to the flavoprotein pyridine nucleotide cytochrome reductase family. Heme b serves as cofactor. Requires FAD as cofactor.

It carries out the reaction 2 nitric oxide + NADPH + 2 O2 = 2 nitrate + NADP(+) + H(+). The enzyme catalyses 2 nitric oxide + NADH + 2 O2 = 2 nitrate + NAD(+) + H(+). Its function is as follows. Is involved in NO detoxification in an aerobic process, termed nitric oxide dioxygenase (NOD) reaction that utilizes O(2) and NAD(P)H to convert NO to nitrate, which protects the bacterium from various noxious nitrogen compounds. Therefore, plays a central role in the inducible response to nitrosative stress. The chain is Flavohemoprotein from Pseudomonas putida (strain ATCC 47054 / DSM 6125 / CFBP 8728 / NCIMB 11950 / KT2440).